Here is a 156-residue protein sequence, read N- to C-terminus: Ribosomal RNA large subunit methyltransferase H (156 aa).

Residues Leu-73, Gly-104, and 123-128 (LSALTL) contribute to the S-adenosyl-L-methionine site.

Belongs to the RNA methyltransferase RlmH family. Homodimer.

Its subcellular location is the cytoplasm. It carries out the reaction pseudouridine(1915) in 23S rRNA + S-adenosyl-L-methionine = N(3)-methylpseudouridine(1915) in 23S rRNA + S-adenosyl-L-homocysteine + H(+). Functionally, specifically methylates the pseudouridine at position 1915 (m3Psi1915) in 23S rRNA. This is Ribosomal RNA large subunit methyltransferase H from Shewanella denitrificans (strain OS217 / ATCC BAA-1090 / DSM 15013).